The chain runs to 286 residues: Ribosomal RNA small subunit methyltransferase A (286 aa).

N28, L30, G55, E77, D103, and N123 together coordinate S-adenosyl-L-methionine.

Belongs to the class I-like SAM-binding methyltransferase superfamily. rRNA adenine N(6)-methyltransferase family. RsmA subfamily.

The protein resides in the cytoplasm. It carries out the reaction adenosine(1518)/adenosine(1519) in 16S rRNA + 4 S-adenosyl-L-methionine = N(6)-dimethyladenosine(1518)/N(6)-dimethyladenosine(1519) in 16S rRNA + 4 S-adenosyl-L-homocysteine + 4 H(+). Functionally, specifically dimethylates two adjacent adenosines (A1518 and A1519) in the loop of a conserved hairpin near the 3'-end of 16S rRNA in the 30S particle. May play a critical role in biogenesis of 30S subunits. In Bradyrhizobium sp. (strain BTAi1 / ATCC BAA-1182), this protein is Ribosomal RNA small subunit methyltransferase A.